A 487-amino-acid polypeptide reads, in one-letter code: Transcription factor GTE5, chloroplastic (487 aa).

Residues 1–32 constitute a chloroplast transit peptide; that stretch reads MSSEHISGGGASKTKKHKWSSSQNRPKPMGVS. Disordered regions lie at residues 1-48, 93-127, and 400-487; these read MSSE…NSFA, ANPG…GADK, and KNEA…DNGN. One can recognise a Bromo domain in the interval 127-233; it reads KGTVQIFKNC…NMFEDKWVSI (107 aa). The NET domain maps to 320 to 401; the sequence is EEEAPVNNRD…GYKESLSKKN (82 aa). Positions 400-414 are enriched in basic and acidic residues; sequence KNEAHGFGSERDAES. The segment covering 415 to 435 has biased composition (polar residues); it reads VHNSIQEPTTLVSGTTTSRVT. Positions 451–487 are enriched in low complexity; sequence NNASGSSSSNSSSSDSGSCSSDTDSDSSSGRGSDNGN.

Interacts with SIZ1 (via PHD domain). Sumoylated by SIZ1.

Its subcellular location is the plastid. The protein resides in the chloroplast. The sequence is that of Transcription factor GTE5, chloroplastic (GTE5) from Arabidopsis thaliana (Mouse-ear cress).